Consider the following 505-residue polypeptide: ATP synthase subunit alpha (505 aa).

171 to 178 (GDRQTGKT) is a binding site for ATP.

This sequence belongs to the ATPase alpha/beta chains family. F-type ATPases have 2 components, CF(1) - the catalytic core - and CF(0) - the membrane proton channel. CF(1) has five subunits: alpha(3), beta(3), gamma(1), delta(1), epsilon(1). CF(0) has three main subunits: a(1), b(2) and c(9-12). The alpha and beta chains form an alternating ring which encloses part of the gamma chain. CF(1) is attached to CF(0) by a central stalk formed by the gamma and epsilon chains, while a peripheral stalk is formed by the delta and b chains.

It is found in the cell inner membrane. It catalyses the reaction ATP + H2O + 4 H(+)(in) = ADP + phosphate + 5 H(+)(out). In terms of biological role, produces ATP from ADP in the presence of a proton gradient across the membrane. The alpha chain is a regulatory subunit. The chain is ATP synthase subunit alpha from Aliarcobacter butzleri (strain RM4018) (Arcobacter butzleri).